Reading from the N-terminus, the 113-residue chain is U11-theraphotoxin-Hhn1s (113 aa).

A signal peptide spans 1–21; the sequence is MNTVRVTFLLVFVLAVSLGQA. A propeptide spanning residues 22–74 is cleaved from the precursor; the sequence is DKDENRMEMQEKTEQGKSYLDFAENLLLQKLEELEAKLLEEDSEESRNSRQKR. Positions 61-83 are disordered; sequence EEDSEESRNSRQKRCIGEGVPCD. Disulfide bonds link C75–C90, C82–C95, and C89–C110.

It belongs to the neurotoxin 14 (magi-1) family. 01 (HNTX-16) subfamily. Expressed by the venom gland.

It is found in the secreted. Functionally, probable ion channel inhibitor. The polypeptide is U11-theraphotoxin-Hhn1s (Cyriopagopus hainanus (Chinese bird spider)).